Consider the following 546-residue polypeptide: Probable protein kinase UbiB (546 aa).

The Protein kinase domain maps to 124–502 (DFDIQPLASA…HVRQSQSRYL (379 aa)). Residues 130–138 (LASASIAQV) and lysine 153 each bind ATP. Residue aspartate 288 is the Proton acceptor of the active site. A run of 2 helical transmembrane segments spans residues 501–521 (YLLG…VNRP) and 522–542 (EWGL…LVGW).

Belongs to the ABC1 family. UbiB subfamily.

Its subcellular location is the cell inner membrane. It functions in the pathway cofactor biosynthesis; ubiquinone biosynthesis [regulation]. Is probably a protein kinase regulator of UbiI activity which is involved in aerobic coenzyme Q (ubiquinone) biosynthesis. The chain is Probable protein kinase UbiB from Salmonella enteritidis PT4 (strain P125109).